Consider the following 657-residue polypeptide: Replication restart protein PriA (657 aa).

Residues 143–309 form the Helicase ATP-binding domain; the sequence is ITASTGARSF…LRGAVRRLPL (167 aa). 156–163 is an ATP binding site; that stretch reads GVTGSGKT. A DEAH box motif is present at residues 252 to 255; the sequence is DEEH. Residues Cys366, Cys369, Cys375, Cys378, Cys393, Cys396, Cys406, and Cys409 each coordinate Zn(2+). The Helicase C-terminal domain occupies 390–570; the sequence is AMQCHYCGRQ…PFVRLIRFVF (181 aa).

It belongs to the helicase family. PriA subfamily. Component of the replication restart primosome. Requires Zn(2+) as cofactor.

It catalyses the reaction Couples ATP hydrolysis with the unwinding of duplex DNA by translocating in the 3'-5' direction.. The enzyme catalyses ATP + H2O = ADP + phosphate + H(+). Functionally, initiates the restart of stalled replication forks, which reloads the replicative helicase on sites other than the origin of replication. Recognizes and binds to abandoned replication forks and remodels them to uncover a helicase loading site. Promotes assembly of the primosome at these replication forks. This chain is Replication restart protein PriA, found in Treponema pallidum (strain Nichols).